A 115-amino-acid polypeptide reads, in one-letter code: NADH-ubiquinone oxidoreductase chain 3 (115 aa).

The next 3 helical transmembrane spans lie at 3–23 (VMLTLMTNVTLASLLVLIAFW), 55–75 (FFLVAITFLLFDLEIALLLPL), and 84–104 (LTTMLIMALLLISLLAASLAY).

Belongs to the complex I subunit 3 family. As to quaternary structure, core subunit of respiratory chain NADH dehydrogenase (Complex I) which is composed of 45 different subunits. Interacts with TMEM186. Interacts with TMEM242.

Its subcellular location is the mitochondrion inner membrane. It catalyses the reaction a ubiquinone + NADH + 5 H(+)(in) = a ubiquinol + NAD(+) + 4 H(+)(out). Functionally, core subunit of the mitochondrial membrane respiratory chain NADH dehydrogenase (Complex I) which catalyzes electron transfer from NADH through the respiratory chain, using ubiquinone as an electron acceptor. Essential for the catalytic activity of complex I. The sequence is that of NADH-ubiquinone oxidoreductase chain 3 from Canis lupus familiaris (Dog).